Reading from the N-terminus, the 867-residue chain is Cadherin-related family member 1 (867 aa).

Residues M1–S21 form the signal peptide. Topologically, residues V22–G707 are extracellular. 6 consecutive Cadherin domains span residues N39–F138, L139–F250, V251–F357, P363–F476, S477–F580, and D572–A692. The chain crosses the membrane as a helical span at residues V708–F728. Residues W729 to Y867 lie on the Cytoplasmic side of the membrane. Residues E777–G825 form a disordered region. A compositionally biased stretch (pro residues) spans P795–L809.

Expressed in photoreceptor cells of the outer nuclear layer of the retina and in the pinal gland.

It is found in the membrane. Its function is as follows. Potential calcium-dependent cell-adhesion protein. The chain is Cadherin-related family member 1 (cdhr1) from Xenopus laevis (African clawed frog).